We begin with the raw amino-acid sequence, 765 residues long: Probable dipeptidyl peptidase 4 (765 aa).

The N-terminal stretch at 1 to 14 (MKWSILLLVGCAAA) is a signal peptide. N-linked (GlcNAc...) asparagine glycosylation is found at asparagine 35, asparagine 78, asparagine 101, asparagine 110, asparagine 169, asparagine 218, asparagine 465, and asparagine 490. Residue serine 613 is the Charge relay system of the active site. Asparagine 665 carries N-linked (GlcNAc...) asparagine glycosylation. Active-site charge relay system residues include aspartate 690 and histidine 725.

The protein belongs to the peptidase S9B family.

It localises to the secreted. It catalyses the reaction Release of an N-terminal dipeptide, Xaa-Yaa-|-Zaa-, from a polypeptide, preferentially when Yaa is Pro, provided Zaa is neither Pro nor hydroxyproline.. Extracellular dipeptidyl-peptidase which removes N-terminal dipeptides sequentially from polypeptides having unsubstituted N-termini provided that the penultimate residue is proline. Contributes to pathogenicity. The polypeptide is Probable dipeptidyl peptidase 4 (dpp4) (Aspergillus fumigatus (strain ATCC MYA-4609 / CBS 101355 / FGSC A1100 / Af293) (Neosartorya fumigata)).